The following is a 253-amino-acid chain: Phosphoglycerate mutase 2 (253 aa).

T3 carries the phosphothreonine modification. Residues 10-17, 23-24, R62, 89-92, K100, and 116-117 each bind substrate; these read RHGESTWN, CG, ERHY, and RR. The Tele-phosphohistidine intermediate role is filled by H11. S14 is subject to Phosphoserine. The active-site Proton donor/acceptor is the E89. Phosphoserine is present on S118. 2 positions are modified to phosphotyrosine: Y132 and Y133. S135 is subject to Phosphoserine. Phosphothreonine is present on T152. 187–188 is a binding site for substrate; it reads GN.

Belongs to the phosphoglycerate mutase family. BPG-dependent PGAM subfamily. Homodimer.

It catalyses the reaction (2R)-2-phosphoglycerate = (2R)-3-phosphoglycerate. The enzyme catalyses (2R)-3-phospho-glyceroyl phosphate = (2R)-2,3-bisphosphoglycerate + H(+). Interconversion of 3- and 2-phosphoglycerate with 2,3-bisphosphoglycerate as the primer of the reaction. Can also catalyze the reaction of EC 5.4.2.4 (synthase), but with a reduced activity. This chain is Phosphoglycerate mutase 2 (PGAM2), found in Bos taurus (Bovine).